We begin with the raw amino-acid sequence, 415 residues long: MRYDHIEEGDPEIFELMRRESLRQNRTLDLIASENLASEAVLEATGSIFTNKYAEGYPNARYYGGCEVADQVEILAIERAKKLFDADHANVQPHSGSQANQAVYLAFLKPGDTILSMSLAAGGHLSHGAPVSMTGKWFNIVHYGVDPKTETIDLNEVEKLALEHKPKLIIAGASAYPRFIDFQGFREIADKVGAIFMVDMAHIAGLVAAGVHPSPVPFADVVTTTTHKTLRGPRGGLILCKAEHAKAIDKAVFPGVQGGPLVHIIAAKAVAFKEDSEPSFKEYSAQVVKNAKTMAETFASKGVRVVTGGTDNHLMLLDVTSVGLTGKEAEELLAEVGIVVNKNAIPFDKLPPRVASGIRIGTPNITTRGLRDEECKLLAEQMSELFITKSEKVKAEIKGLVQELTERYPAYKGWS.

Residues leucine 119 and 123 to 125 (GHL) each bind (6S)-5,6,7,8-tetrahydrofolate. Position 228 is an N6-(pyridoxal phosphate)lysine (lysine 228).

It belongs to the SHMT family. Homodimer. Pyridoxal 5'-phosphate is required as a cofactor.

The protein resides in the cytoplasm. It catalyses the reaction (6R)-5,10-methylene-5,6,7,8-tetrahydrofolate + glycine + H2O = (6S)-5,6,7,8-tetrahydrofolate + L-serine. It functions in the pathway one-carbon metabolism; tetrahydrofolate interconversion. The protein operates within amino-acid biosynthesis; glycine biosynthesis; glycine from L-serine: step 1/1. Functionally, catalyzes the reversible interconversion of serine and glycine with tetrahydrofolate (THF) serving as the one-carbon carrier. This reaction serves as the major source of one-carbon groups required for the biosynthesis of purines, thymidylate, methionine, and other important biomolecules. Also exhibits THF-independent aldolase activity toward beta-hydroxyamino acids, producing glycine and aldehydes, via a retro-aldol mechanism. The chain is Serine hydroxymethyltransferase from Coprothermobacter proteolyticus (strain ATCC 35245 / DSM 5265 / OCM 4 / BT).